We begin with the raw amino-acid sequence, 259 residues long: Probable dihydroorotate dehydrogenase B (NAD(+)), electron transfer subunit (259 aa).

Residues 1-89 (MLPLNVTITQ…RGPFGKGFTL (89 aa)) enclose the FAD-binding FR-type domain. Residues Cys211, Cys216, Cys219, and Cys229 each contribute to the [2Fe-2S] cluster site.

This sequence belongs to the PyrK family. As to quaternary structure, heterotetramer of 2 PyrK and 2 PyrD type B subunits. [2Fe-2S] cluster serves as cofactor. It depends on FAD as a cofactor.

It participates in pyrimidine metabolism; UMP biosynthesis via de novo pathway; orotate from (S)-dihydroorotate (NAD(+) route): step 1/1. Functionally, responsible for channeling the electrons from the oxidation of dihydroorotate from the FMN redox center in the PyrD type B subunit to the ultimate electron acceptor NAD(+). This is Probable dihydroorotate dehydrogenase B (NAD(+)), electron transfer subunit from Methanosarcina acetivorans (strain ATCC 35395 / DSM 2834 / JCM 12185 / C2A).